The following is a 220-amino-acid chain: Sugar transporter SWEET1 (220 aa).

7 helical membrane-spanning segments follow: residues 9–29 (LMTF…IMPL), 44–64 (VAGL…SYAL), 70–90 (TMLF…FNYW), 106–126 (VMIA…NTVD), 138–158 (LSSV…AIVI), 167–187 (IINV…FGLL), and 191–211 (IYIY…LTLI). Residues 12-92 (FIQFCATFIT…IYYVFNYWKN (81 aa)) form the MtN3/slv 1 domain. Positions 134 to 217 (RLGFLSSVVC…LTLIKLYPPQ (84 aa)) constitute a MtN3/slv 2 domain.

It belongs to the SWEET sugar transporter family.

It localises to the golgi apparatus membrane. It is found in the cell membrane. In terms of biological role, mediates both low-affinity uptake and efflux of sugar across the membrane. The chain is Sugar transporter SWEET1 (slc50a1) from Dictyostelium discoideum (Social amoeba).